The primary structure comprises 156 residues: Small ribosomal subunit protein uS7 (156 aa).

Belongs to the universal ribosomal protein uS7 family. Part of the 30S ribosomal subunit. Contacts proteins S9 and S11.

Its function is as follows. One of the primary rRNA binding proteins, it binds directly to 16S rRNA where it nucleates assembly of the head domain of the 30S subunit. Is located at the subunit interface close to the decoding center, probably blocks exit of the E-site tRNA. The sequence is that of Small ribosomal subunit protein uS7 from Myxococcus xanthus (strain DK1622).